A 299-amino-acid chain; its full sequence is tRNA dimethylallyltransferase (299 aa).

Residue 11–18 (GPTAVGKT) coordinates ATP. 13–18 (TAVGKT) is a substrate binding site. An interaction with substrate tRNA region spans residues 36–39 (DSQQ).

This sequence belongs to the IPP transferase family. In terms of assembly, monomer. Mg(2+) is required as a cofactor.

It carries out the reaction adenosine(37) in tRNA + dimethylallyl diphosphate = N(6)-dimethylallyladenosine(37) in tRNA + diphosphate. Catalyzes the transfer of a dimethylallyl group onto the adenine at position 37 in tRNAs that read codons beginning with uridine, leading to the formation of N6-(dimethylallyl)adenosine (i(6)A). In Streptococcus pyogenes serotype M1, this protein is tRNA dimethylallyltransferase.